The chain runs to 134 residues: Ribonuclease P protein component (134 aa).

Belongs to the RnpA family. Consists of a catalytic RNA component (M1 or rnpB) and a protein subunit.

The enzyme catalyses Endonucleolytic cleavage of RNA, removing 5'-extranucleotides from tRNA precursor.. Its function is as follows. RNaseP catalyzes the removal of the 5'-leader sequence from pre-tRNA to produce the mature 5'-terminus. It can also cleave other RNA substrates such as 4.5S RNA. The protein component plays an auxiliary but essential role in vivo by binding to the 5'-leader sequence and broadening the substrate specificity of the ribozyme. The protein is Ribonuclease P protein component of Pseudomonas putida (strain GB-1).